The primary structure comprises 1314 residues: Enfumafungin synthase efuA (1314 aa).

Positions Met-1–Gly-680 are terpenne cyclase. PFTB repeat units lie at residues Leu-19–Leu-62 and Gly-66–Gly-107. Helical transmembrane passes span Phe-133–Met-153, Ala-155–Ala-175, and Tyr-230–Leu-250. Residues Leu-260–Ser-300 form a PFTB 3 repeat. Asp-395 (proton donor) is an active-site residue. PFTB repeat units follow at residues Val-417–Val-458 and Cys-546–Arg-597. The tract at residues Ile-681–Lys-1314 is glycosyltransferase. The helical transmembrane segment at Ala-1200 to Lys-1220 threads the bilayer. Residues Asp-1289–Lys-1314 are disordered. Residues Ala-1292–Gly-1302 are compositionally biased toward low complexity.

It in the N-terminal section; belongs to the terpene cyclase/mutase family. The protein in the C-terminal section; belongs to the glycosyltransferase 28 family.

Its subcellular location is the membrane. The protein operates within secondary metabolite biosynthesis; terpenoid biosynthesis. Functionally, terpene cyclase-glycosyl transferase fusion protein; part of the gene cluster that mediates the biosynthesis of enfumafungin, a glycosylated fernene-type triterpenoid with potent antifungal activity, mediated by its interaction with beta-1,3-glucan synthase and the fungal cell wall. The pathway begins with the terpene cyclase-glycosyl transferase fusion protein that most likely uses 2,3-oxidosqualene as substrate and catalyzes glycosylation immediately after cyclization. The fernene glycoside then could be processed by the desaturase efuI which catalyzes isomerization of a double bond established by efuA to form the core structure. The latter would then undergo a series of hydroxylations in unknown order at C-2, C-19, C-23 and C-25, which would be catalyzed by two of the three cytochrome P450 monooxygenases efuB, efuG or efuH. The hydroxy-group at C-25 becomes oxidized by the dehydrogenase efuE to enable a spontaneous, non-enzymatic hemiacetal formation with C-23. After hydroxylation at C-2, acetylation by the acetyltransferase efuC takes place. The final steps in enfumafungin biosynthesis require expansion of the 5-membered ring by lactonization via a Baeyer-Villiger reaction mediated by one of the BGC's cytochrome P450 monooxygenases (efuB, efuG or efuH) followed by ring cleavage. This type of reaction would establish a double bond between C-20 and C-21 which could be reduced by the reductase efuL to form the final product. The chain is Enfumafungin synthase efuA from Hormonema carpetanum.